A 404-amino-acid polypeptide reads, in one-letter code: Type I restriction enzyme EcoR124I/EcoR124II specificity subunit (404 aa).

The target-recognition domain 1 stretch occupies residues Met-1–Lys-153. The conserved region 1 stretch occupies residues Ser-154 to Gly-199. Residues Glu-200–Pro-349 form a target-recognition domain 2 region. The conserved region 2 stretch occupies residues Asn-350–Asn-404.

Belongs to the type-I restriction system S methylase family. In terms of assembly, the type I restriction/modification system is composed of three polypeptides R, M and S; the restriction enzyme has stoichiometry R(2)M(2)S(1) while the methyltransferase is M(2)S(1). There is an equilibrium between R(2)M(2)S(1) and R(1)M(2)S(1); the latter is methylation and translocation proficient but restriction deficient. (Microbial infection) Holoenenzyme interacts with Escherichia phage T7 protein Ocr; this interaction leads to the inhibition of the restriction activity, but may still allow methylation and translocation.

The specificity (S) subunit of a type I restriction enzyme; this subunit dictates DNA sequence specificity. The presence or absence of a 4-residue repeat changes the sequence specificity; a third copy of TAEL inserted at position 179-180 changes the recognition site from 5'-GAAN(6)RTCG-3' (for EcoR124I) to 5'-GAAN(7)RTCG-3' (for EcoR124II). The M and S subunits together form a methyltransferase (MTase) that methylates A-3 on the top and bottom strand of the sequence 5'-GAAN(7)RTCG-3'. In the presence of the R subunit the complex can also act as an endonuclease, binding to the same target sequence but cutting the DNA some distance from this site. Whether the DNA is cut or modified depends on the methylation state of the target sequence. When the target site is unmodified, the DNA is cut. When the target site is hemimethylated, the complex acts as a maintenance MTase modifying the DNA so that both strands become methylated. After locating a non-methylated recognition site, the enzyme complex serves as a molecular motor that translocates DNA in an ATP-dependent manner until a collision occurs that triggers cleavage. The R(1)M(2)S(1) complex translocates an average of 555 bp/second on nicked DNA; the R(2)M(2)S(1) complex translocates at double that speed. The 2 R subunit motors are independent and track along the helical pitch of the DNA, inducing positive supercoiling ahead of themselves. The chain is Type I restriction enzyme EcoR124I/EcoR124II specificity subunit (hsdS) from Escherichia coli.